Consider the following 447-residue polypeptide: Acidic leucine-rich nuclear phosphoprotein 32-related protein (447 aa).

LRR repeat units follow at residues 49–70, 71–90, and 96–117; these read NLQH…PRLG, NLQK…EFLV, and SFCD…APLA. Residues 129-167 form the LRRCT domain; that stretch reads CPVTRLKDYRSRVFGLIKTLKYLDKTDAEGNERPESDDE. The disordered stretch occupies residues 155–447; the sequence is DAEGNERPES…EDDDDDDEER (293 aa). Acidic residues-rich tracts occupy residues 163-194 and 215-231; these read ESDD…EIDG and VDVD…DESE. A compositionally biased stretch (polar residues) spans 232 to 242; sequence QATGVNGTSYR. Composition is skewed to acidic residues over residues 256 to 277, 284 to 309, 336 to 374, 397 to 415, and 433 to 447; these read VRED…DNDV, EDSE…EEVD, GDDD…EESG, PINE…DDLP, and DDDD…DEER.

Belongs to the ANP32 family.

The protein is Acidic leucine-rich nuclear phosphoprotein 32-related protein of Arabidopsis thaliana (Mouse-ear cress).